Here is a 280-residue protein sequence, read N- to C-terminus: Dexamethasone-induced Ras-related protein 1 (280 aa).

Position 11 is an S-nitrosocysteine (cysteine 11). Glycine 31 to threonine 38 lines the GTP pocket. The short motif at tyrosine 53 to histidine 61 is the Effector region element. Residues aspartate 78–asparagine 82 and asparagine 145–aspartate 148 each bind GTP. Cysteine 277 is modified (cysteine methyl ester). The S-farnesyl cysteine moiety is linked to residue cysteine 277. A propeptide spans valine 278–serine 280 (removed in mature form).

It belongs to the small GTPase superfamily. RasD family. As to quaternary structure, component of a complex, at least composed of APBB1, RASD1/DEXRAS1 and APP. Interacts with APBB1/FE65. Forms a ternary complex with CAPON and NOS1. S-nitrosylation stimulates guanine-nucleotide exchange activity. Expressed in brain, heart, kidney and liver.

Its subcellular location is the cell membrane. The protein resides in the cytoplasm. It localises to the perinuclear region. It is found in the nucleus. Small GTPase. Negatively regulates the transcription regulation activity of the APBB1/FE65-APP complex via its interaction with APBB1/FE65. The polypeptide is Dexamethasone-induced Ras-related protein 1 (Rasd1) (Mus musculus (Mouse)).